Consider the following 67-residue polypeptide: DNA-directed RNA polymerase subunit omega (67 aa).

This sequence belongs to the RNA polymerase subunit omega family. The RNAP catalytic core consists of 2 alpha, 1 beta, 1 beta' and 1 omega subunit. When a sigma factor is associated with the core the holoenzyme is formed, which can initiate transcription.

It catalyses the reaction RNA(n) + a ribonucleoside 5'-triphosphate = RNA(n+1) + diphosphate. Functionally, promotes RNA polymerase assembly. Latches the N- and C-terminal regions of the beta' subunit thereby facilitating its interaction with the beta and alpha subunits. The sequence is that of DNA-directed RNA polymerase subunit omega from Delftia acidovorans (strain DSM 14801 / SPH-1).